The following is a 211-amino-acid chain: Urease accessory protein UreG (211 aa).

GTP is bound at residue 11–18; it reads GPVGSGKT.

This sequence belongs to the SIMIBI class G3E GTPase family. UreG subfamily. Homodimer. UreD, UreF and UreG form a complex that acts as a GTP-hydrolysis-dependent molecular chaperone, activating the urease apoprotein by helping to assemble the nickel containing metallocenter of UreC. The UreE protein probably delivers the nickel.

Its subcellular location is the cytoplasm. In terms of biological role, facilitates the functional incorporation of the urease nickel metallocenter. This process requires GTP hydrolysis, probably effectuated by UreG. The polypeptide is Urease accessory protein UreG (Laribacter hongkongensis (strain HLHK9)).